A 211-amino-acid polypeptide reads, in one-letter code: Superoxide dismutase [Mn], mitochondrial (211 aa).

Residues 1-24 constitute a mitochondrion transit peptide; that stretch reads MLCRAVCSASRRLAPALGILGVRQ. Position 50 (His50) interacts with Mn(2+). Tyr58 bears the 3'-nitrotyrosine mark. Lys68 and Lys75 each carry N6-acetyllysine; alternate. An N6-succinyllysine; alternate mark is found at Lys68 and Lys75. His98 serves as a coordination point for Mn(2+). Lys114 bears the N6-acetyllysine mark. An N6-acetyllysine; alternate mark is found at Lys122 and Lys130. N6-succinyllysine; alternate is present on residues Lys122 and Lys130. Mn(2+)-binding residues include Asp183 and His187. Residue Lys202 is modified to N6-acetyllysine.

Belongs to the iron/manganese superoxide dismutase family. In terms of assembly, homotetramer. The cofactor is Mn(2+). Nitrated under oxidative stress. Nitration coupled with oxidation inhibits the catalytic activity. In terms of processing, acetylation at Lys-122 decreases enzymatic activity. Deacetylated by SIRT3 upon exposure to ionizing radiations or after long fasting. Post-translationally, polyubiquitinated; leading to proteasomal degradation. Deubiquitinated by USP36 which increases protein stability.

It localises to the mitochondrion matrix. The catalysed reaction is 2 superoxide + 2 H(+) = H2O2 + O2. In terms of biological role, destroys superoxide anion radicals which are normally produced within the cells and which are toxic to biological systems. This chain is Superoxide dismutase [Mn], mitochondrial (SOD2), found in Cavia porcellus (Guinea pig).